The following is a 502-amino-acid chain: Probable glycine dehydrogenase (decarboxylating) subunit 2 (502 aa).

Lys273 is subject to N6-(pyridoxal phosphate)lysine.

The protein belongs to the GcvP family. C-terminal subunit subfamily. The glycine cleavage system is composed of four proteins: P, T, L and H. In this organism, the P 'protein' is a heterodimer of two subunits. Pyridoxal 5'-phosphate is required as a cofactor.

It carries out the reaction N(6)-[(R)-lipoyl]-L-lysyl-[glycine-cleavage complex H protein] + glycine + H(+) = N(6)-[(R)-S(8)-aminomethyldihydrolipoyl]-L-lysyl-[glycine-cleavage complex H protein] + CO2. The glycine cleavage system catalyzes the degradation of glycine. The P protein binds the alpha-amino group of glycine through its pyridoxal phosphate cofactor; CO(2) is released and the remaining methylamine moiety is then transferred to the lipoamide cofactor of the H protein. This is Probable glycine dehydrogenase (decarboxylating) subunit 2 from Pyrococcus horikoshii (strain ATCC 700860 / DSM 12428 / JCM 9974 / NBRC 100139 / OT-3).